The primary structure comprises 442 residues: Probable protein phosphatase 2C 15 (442 aa).

In terms of domain architecture, PPM-type phosphatase spans 35–303 (AAERPELQVG…DDTTCIVVDI (269 aa)). Mn(2+)-binding residues include D80, G81, D255, and D294. Residues 420 to 434 (KKEAMEGKRRSRDSS) are compositionally biased toward basic and acidic residues. The interval 420–442 (KKEAMEGKRRSRDSSSRNSGSSE) is disordered.

This sequence belongs to the PP2C family. It depends on Mg(2+) as a cofactor. Mn(2+) serves as cofactor.

The catalysed reaction is O-phospho-L-seryl-[protein] + H2O = L-seryl-[protein] + phosphate. It carries out the reaction O-phospho-L-threonyl-[protein] + H2O = L-threonyl-[protein] + phosphate. In Oryza sativa subsp. japonica (Rice), this protein is Probable protein phosphatase 2C 15.